The sequence spans 463 residues: MGKKQHIAIFTTASLPWLTGTAVNPLFRAAYLSKDGERDVTLVIPWLSLKDQALVYPNNITFASPSEHEKYIRQWLEERVGFTSGFSIKFYPGKFSRDKRSILAVGDISEVIPDKEADIAVLEEPEHLTWFHHGKRWKTKFRLVIGIIHTNYLEYVKREKNGQMQAFLLKYLNNWVVGIYCHKVIRLSAATQDYSGSIVCNVHGVNPKFLEIGKKKREQQQNGDQAFTKGAYFIGKMVWSKGYKELLHLFKNHQKELSALEVDLFGSGEDSDEVQKAAKKLEMAVRVHPARDHADALFHDYKLFLNPSTTDVVCTTTAEALAMGKIVVCANHCSNEFFKQFPNCWTFDESKGFVQLILKALAEEPAQLTDAQRHDLSWEAATERFLKAAELDKPFEKKLSRSTSIYMSTSLNLQQTVDDASAYVHHVASGFEISRRMFGAIPGSLKPDEELSKELGLSDSGRK.

Positions 1-22 (MGKKQHIAIFTTASLPWLTGTA) are cleaved as a signal peptide.

This sequence belongs to the glycosyltransferase group 1 family. Glycosyltransferase 4 subfamily. High expression in nodules infected cells, and low in nodule and root vascular tissue.

The protein localises to the plastid. It is found in the chloroplast outer membrane. It localises to the plastid outer membrane. The enzyme catalyses a 1,2-diacyl-3-O-(beta-D-galactosyl)-sn-glycerol + UDP-alpha-D-galactose = a 1,2-diacyl-3-O-[alpha-D-galactosyl-(1-&gt;6)-beta-D-galactosyl]-sn-glycerol + UDP + H(+). Functionally, involved in the synthesis of diacylglycerol galactolipids that are specifically found in thylakoid and in nodule peribacteroid membranes. Specific for alpha-glycosidic linkages. In Lotus japonicus (Lotus corniculatus var. japonicus), this protein is Digalactosyldiacylglycerol synthase 2, chloroplastic.